A 95-amino-acid polypeptide reads, in one-letter code: Neutrophil antibiotic peptide NP-5 (95 aa).

A signal peptide spans 1–19; sequence MRTLALLAAILLVTLQAQA. Residues 20-62 constitute a propeptide that is removed on maturation; that stretch reads ELHSGMADDGVDQQQPRAQDLDVAVYIKQDETSPLEVLGAKAG. 3 disulfide bridges follow: cysteine 65/cysteine 93, cysteine 67/cysteine 82, and cysteine 72/cysteine 92.

Belongs to the alpha-defensin family.

Its subcellular location is the secreted. Its function is as follows. Microbicidal activity. This is Neutrophil antibiotic peptide NP-5 from Oryctolagus cuniculus (Rabbit).